Reading from the N-terminus, the 356-residue chain is Phosphoserine aminotransferase (356 aa).

R41 contributes to the L-glutamate binding site. Pyridoxal 5'-phosphate-binding positions include 76 to 77, W102, T150, D169, and Q192; that span reads AS. N6-(pyridoxal phosphate)lysine is present on K193. A pyridoxal 5'-phosphate-binding site is contributed by 234-235; that stretch reads NT.

It belongs to the class-V pyridoxal-phosphate-dependent aminotransferase family. SerC subfamily. In terms of assembly, homodimer. The cofactor is pyridoxal 5'-phosphate.

It localises to the cytoplasm. It catalyses the reaction O-phospho-L-serine + 2-oxoglutarate = 3-phosphooxypyruvate + L-glutamate. The enzyme catalyses 4-(phosphooxy)-L-threonine + 2-oxoglutarate = (R)-3-hydroxy-2-oxo-4-phosphooxybutanoate + L-glutamate. The protein operates within amino-acid biosynthesis; L-serine biosynthesis; L-serine from 3-phospho-D-glycerate: step 2/3. It participates in cofactor biosynthesis; pyridoxine 5'-phosphate biosynthesis; pyridoxine 5'-phosphate from D-erythrose 4-phosphate: step 3/5. Functionally, catalyzes the reversible conversion of 3-phosphohydroxypyruvate to phosphoserine and of 3-hydroxy-2-oxo-4-phosphonooxybutanoate to phosphohydroxythreonine. In Flavobacterium psychrophilum (strain ATCC 49511 / DSM 21280 / CIP 103535 / JIP02/86), this protein is Phosphoserine aminotransferase.